We begin with the raw amino-acid sequence, 321 residues long: tRNA-dihydrouridine synthase B (321 aa).

Residues 16 to 18 (PMA) and Gln-70 contribute to the FMN site. Cys-100 (proton donor) is an active-site residue. FMN is bound by residues Lys-139, 200–202 (NGD), and 224–225 (GR).

Belongs to the Dus family. DusB subfamily. The cofactor is FMN.

It carries out the reaction a 5,6-dihydrouridine in tRNA + NAD(+) = a uridine in tRNA + NADH + H(+). The enzyme catalyses a 5,6-dihydrouridine in tRNA + NADP(+) = a uridine in tRNA + NADPH + H(+). In terms of biological role, catalyzes the synthesis of 5,6-dihydrouridine (D), a modified base found in the D-loop of most tRNAs, via the reduction of the C5-C6 double bond in target uridines. This Yersinia pestis protein is tRNA-dihydrouridine synthase B.